The sequence spans 542 residues: Beta-fructofuranosidase, insoluble isoenzyme 5 (542 aa).

Residues 50-53, glutamine 69, tryptophan 77, and 114-115 contribute to the substrate site; these read WQND and WS. Residue aspartate 53 is part of the active site. Asparagine 142 carries N-linked (GlcNAc...) asparagine glycosylation. Residues 178–179 and glutamate 233 contribute to the substrate site; that span reads RD. A disulfide bridge connects residues cysteine 389 and cysteine 436. N-linked (GlcNAc...) asparagine glycans are attached at residues asparagine 510 and asparagine 516.

This sequence belongs to the glycosyl hydrolase 32 family. As to expression, expressed in roots and leaves.

The protein localises to the secreted. It is found in the extracellular space. Its subcellular location is the apoplast. The protein resides in the cell wall. It carries out the reaction Hydrolysis of terminal non-reducing beta-D-fructofuranoside residues in beta-D-fructofuranosides.. May play a role in stress response. This chain is Beta-fructofuranosidase, insoluble isoenzyme 5 (CIN5), found in Oryza sativa subsp. japonica (Rice).